A 381-amino-acid polypeptide reads, in one-letter code: tRNA pseudouridine synthase D (381 aa).

The Nucleophile role is filled by Asp81. The TRUD domain occupies Gly160–Val335.

Belongs to the pseudouridine synthase TruD family.

The enzyme catalyses uridine(13) in tRNA = pseudouridine(13) in tRNA. Functionally, responsible for synthesis of pseudouridine from uracil-13 in transfer RNAs. The polypeptide is tRNA pseudouridine synthase D (Helicobacter pylori (strain Shi470)).